The following is a 407-amino-acid chain: Probable tRNA sulfurtransferase (407 aa).

The region spanning 61–165 (NEITNRLSKI…LDAIYMYEEV (105 aa)) is the THUMP domain. ATP contacts are provided by residues 183–184 (ML), 208–209 (HF), Arg-265, Gly-287, and Gln-296.

It belongs to the ThiI family.

The protein resides in the cytoplasm. It catalyses the reaction [ThiI sulfur-carrier protein]-S-sulfanyl-L-cysteine + a uridine in tRNA + 2 reduced [2Fe-2S]-[ferredoxin] + ATP + H(+) = [ThiI sulfur-carrier protein]-L-cysteine + a 4-thiouridine in tRNA + 2 oxidized [2Fe-2S]-[ferredoxin] + AMP + diphosphate. It carries out the reaction [ThiS sulfur-carrier protein]-C-terminal Gly-Gly-AMP + S-sulfanyl-L-cysteinyl-[cysteine desulfurase] + AH2 = [ThiS sulfur-carrier protein]-C-terminal-Gly-aminoethanethioate + L-cysteinyl-[cysteine desulfurase] + A + AMP + 2 H(+). It functions in the pathway cofactor biosynthesis; thiamine diphosphate biosynthesis. Catalyzes the ATP-dependent transfer of a sulfur to tRNA to produce 4-thiouridine in position 8 of tRNAs, which functions as a near-UV photosensor. Also catalyzes the transfer of sulfur to the sulfur carrier protein ThiS, forming ThiS-thiocarboxylate. This is a step in the synthesis of thiazole, in the thiamine biosynthesis pathway. The sulfur is donated as persulfide by IscS. This is Probable tRNA sulfurtransferase from Staphylococcus aureus (strain MRSA252).